We begin with the raw amino-acid sequence, 176 residues long: Cytochrome b (176 aa).

Helical transmembrane passes span 33 to 53, 77 to 98, and 113 to 133; these read FGSL…FLAM, WLLR…YLHI, and WNVG…GYVL. Residues histidine 83 and histidine 97 each contribute to the heme b site.

The protein belongs to the cytochrome b family. The cytochrome bc1 complex contains 11 subunits: 3 respiratory subunits (MT-CYB, CYC1 and UQCRFS1), 2 core proteins (UQCRC1 and UQCRC2) and 6 low-molecular weight proteins (UQCRH/QCR6, UQCRB/QCR7, UQCRQ/QCR8, UQCR10/QCR9, UQCR11/QCR10 and a cleavage product of UQCRFS1). This cytochrome bc1 complex then forms a dimer. Requires heme b as cofactor.

It localises to the mitochondrion inner membrane. Component of the ubiquinol-cytochrome c reductase complex (complex III or cytochrome b-c1 complex) that is part of the mitochondrial respiratory chain. The b-c1 complex mediates electron transfer from ubiquinol to cytochrome c. Contributes to the generation of a proton gradient across the mitochondrial membrane that is then used for ATP synthesis. In Nyctinomops aurispinosus (Peale's free-tailed bat), this protein is Cytochrome b (MT-CYB).